We begin with the raw amino-acid sequence, 69 residues long: UPF0346 protein YuiB (69 aa).

The protein belongs to the UPF0346 family.

The chain is UPF0346 protein YuiB (yuiB) from Lactococcus lactis subsp. lactis (strain IL1403) (Streptococcus lactis).